Consider the following 179-residue polypeptide: MSRIGKQPIPVPEKVAVELDGLSLTVKGPKGELSRTLPEGVSISQVDNSIVVSAINSKRKSRERHGLSRSLVANMVEGVSKGYSKKLEIVGVGSRAQVKGKNLIVSAGYSHPVEVIPPDGITFVVENNTNVTVSGIDKELVGNEAAKIRAIRPPEPYKGKGIKYAGERIIRKAGKSGKK.

Belongs to the universal ribosomal protein uL6 family. Part of the 50S ribosomal subunit.

Functionally, this protein binds to the 23S rRNA, and is important in its secondary structure. It is located near the subunit interface in the base of the L7/L12 stalk, and near the tRNA binding site of the peptidyltransferase center. In Prochlorococcus marinus (strain MIT 9211), this protein is Large ribosomal subunit protein uL6.